Here is a 245-residue protein sequence, read N- to C-terminus: MYRYKISVEYLGTNLAGWQRQSGVMSVQQILEEAIYKFSGEQVTLFGSGRTDAGVHAIGQIAHFDLSKYFEPYKIIRAINYFTRPYIVGVCNCELVDNNFHARFSAIARHYVYRILNRPYPSVIDFDRVWWISVPLDVSAMQKSSLYLLGKHNFTSFRASSCQSKSPIKTLTKLDIIKENEEIKLYFSAPSFLHHMVRNIVGSLVLVGKNIWQAEQMQQVLEVADRKAAGPTAPACGLYFIKADY.

The Nucleophile role is filled by Asp52. A substrate-binding site is contributed by Tyr111.

Belongs to the tRNA pseudouridine synthase TruA family. As to quaternary structure, homodimer.

It catalyses the reaction uridine(38/39/40) in tRNA = pseudouridine(38/39/40) in tRNA. Formation of pseudouridine at positions 38, 39 and 40 in the anticodon stem and loop of transfer RNAs. The polypeptide is tRNA pseudouridine synthase A (Rickettsia bellii (strain RML369-C)).